The sequence spans 696 residues: Tensin-4 (696 aa).

Positions 1–14 are cleaved as a signal peptide; it reads MSSSLLAGGHMVSL. Disordered regions lie at residues 157–246, 271–344, and 356–416; these read LDGP…RAPQ, SLPH…CPAS, and LING…KDMQ. Over residues 192 to 203 the composition is skewed to polar residues; sequence SSSNESLIFSGN. At Ser-230 the chain carries Phosphoserine. The segment covering 271 to 304 has biased composition (low complexity); the sequence is SLPHSSLSSYPSSSRSLGSPASSSSSLHSLDRGS. Polar residues-rich tracts occupy residues 326-344 and 372-397; these read QAVQ…CPAS and PGHQ…SPSK. Residues 429 to 536 enclose the SH2 domain; that stretch reads WFKPSITREQ…ALPCKLTIPQ (108 aa). Residues 563–690 form the PTB domain; sequence CHTLYLSSVS…QVISLVTALL (128 aa).

It belongs to the PTEN phosphatase protein family. As to quaternary structure, interacts (via SH2 domain) with Rho GTPase-activating protein DLC1 (via C-terminus); the interaction is independent of DLC1 tyrosine phosphorylation. Interacts with integrin ITGB1; the interaction displaces tensin TNS3 from the ITGB1 cytoplasmic tail and promotes ITGB1 stability. Interacts (via SH2 domain) with E3 ubiquitin-protein ligase CBL (phosphorylated on 'Tyr-780'); the interaction is enhanced in the presence of EGF and reduces interaction of CBL with EGFR. Interacts (via SH2 domain) with receptor tyrosine kinase MET (when phosphorylated); the interaction increases MET protein stability.

Its subcellular location is the cell junction. It is found in the focal adhesion. The protein resides in the cytoplasm. It localises to the cytoskeleton. Functionally, promotes EGF-induced cell migration by displacing tensin TNS3 from the cytoplasmic tail of integrin ITGB1 which results in dissociation of TNS3 from focal adhesions, disassembly of actin stress fibers and initiation of cell migration. Suppresses ligand-induced degradation of EGFR by reducing EGFR ubiquitination in the presence of EGF. Increases MET protein stability by inhibiting MET endocytosis and subsequent lysosomal degradation which leads to increased cell survival, proliferation and migration. This is Tensin-4 (Tns4) from Mus musculus (Mouse).